The sequence spans 265 residues: Mlc titration factor A (265 aa).

Positions 111, 148, 152, and 211 each coordinate Zn(2+).

Belongs to the MtfA family. In terms of assembly, interacts with Mlc. The cofactor is Zn(2+).

It localises to the cytoplasm. Involved in the modulation of the activity of the glucose-phosphotransferase system (glucose-PTS). Interacts with the transcriptional repressor Mlc, preventing its interaction with DNA and leading to the modulation of expression of genes regulated by Mlc, including ptsG, which encodes the PTS system glucose-specific EIICB component. Functionally, shows zinc-dependent metallopeptidase activity. This chain is Mlc titration factor A, found in Salmonella typhi.